Reading from the N-terminus, the 359-residue chain is Fructose-bisphosphate aldolase, cytoplasmic isozyme 2 (359 aa).

Residues arginine 52 and lysine 143 each coordinate substrate. Glutamate 184 serves as the catalytic Proton acceptor. Lysine 226 (schiff-base intermediate with dihydroxyacetone-P) is an active-site residue.

The protein belongs to the class I fructose-bisphosphate aldolase family.

It is found in the cytoplasm. The enzyme catalyses beta-D-fructose 1,6-bisphosphate = D-glyceraldehyde 3-phosphate + dihydroxyacetone phosphate. The protein operates within carbohydrate degradation; glycolysis; D-glyceraldehyde 3-phosphate and glycerone phosphate from D-glucose: step 4/4. In Pisum sativum (Garden pea), this protein is Fructose-bisphosphate aldolase, cytoplasmic isozyme 2.